Consider the following 158-residue polypeptide: 3-hydroxyacyl-[acyl-carrier-protein] dehydratase FabZ (158 aa).

His-57 is an active-site residue.

The protein belongs to the thioester dehydratase family. FabZ subfamily.

It localises to the cytoplasm. It catalyses the reaction a (3R)-hydroxyacyl-[ACP] = a (2E)-enoyl-[ACP] + H2O. Involved in unsaturated fatty acids biosynthesis. Catalyzes the dehydration of short chain beta-hydroxyacyl-ACPs and long chain saturated and unsaturated beta-hydroxyacyl-ACPs. This is 3-hydroxyacyl-[acyl-carrier-protein] dehydratase FabZ from Anaeromyxobacter sp. (strain Fw109-5).